A 715-amino-acid polypeptide reads, in one-letter code: Gelsolin, cytoplasmic (715 aa).

Residues 1-124 (MTTELEIQKA…YLIGGVASGF (124 aa)) are actin-severing. The stretch at 24–75 (FELVPVPKTNHGKFYTGDSYIILKTTALESGRGFEWNLHYWQGKESSQDERG) is one Gelsolin-like 1 repeat. The segment at 72-75 (DERG) is actin-actin interfilament contact point. An a 1,2-diacyl-sn-glycero-3-phospho-(1D-myo-inositol-4,5-bisphosphate)-binding site is contributed by 136 to 145 (KVLTRVKGKR). 3 Gelsolin-like repeats span residues 147–187 (VRAT…FEKN), 260–306 (LKIT…TERA), and 405–451 (LRKE…NERT). Positions 384 to 715 (AAESKMIDDG…FLGWDKTLWD (332 aa)) are actin-binding, Ca-sensitive. Positions 421, 422, 449, 499, 539, 540, 562, 642, and 665 each coordinate Ca(2+). Gelsolin-like repeat units lie at residues 524–564 (CRAV…SEIQ) and 625–667 (FIAE…EEKM).

Belongs to the villin/gelsolin family. As to expression, predominantly in the body wall muscle, but expression is not restricted to muscle cells.

It localises to the cytoplasm. The protein localises to the cytoskeleton. Functionally, calcium-regulated, actin-modulating protein that binds to the plus (or barbed) ends of actin monomers or filaments, preventing monomer exchange (end-blocking or capping). It can promote the assembly of monomers into filaments (nucleation) as well as sever filaments already formed. The sequence is that of Gelsolin, cytoplasmic from Halocynthia roretzi (Sea squirt).